A 614-amino-acid polypeptide reads, in one-letter code: Deoxynucleoside triphosphate triphosphohydrolase SAMHD1 (614 aa).

Positions Met-1 to Ala-13 are enriched in low complexity. Positions Met-1–Asp-33 are disordered. The SAM domain occupies Trp-37–Thr-102. 2 residues coordinate GTP: Lys-107 and Val-108. Residue Asn-110 coordinates dGTP. GTP contacts are provided by Asp-128, Gln-133, and Arg-136. Positions 140, 141, 147, and 155 each coordinate dGTP. Gln-140 serves as a coordination point for dATP. DCTP is bound at residue Gln-140. Gln-140 lines the dTTP pocket. Arg-155 is a dATP binding site. DCTP is bound at residue Arg-155. Arg-155 lines the dTTP pocket. One can recognise an HD domain in the interval Arg-155–Phe-307. Mn(2+) is bound by residues His-158, His-197, and Asp-198. 2 residues coordinate dATP: His-201 and His-206. DCTP is bound by residues His-201 and His-206. Residues His-201 and His-206 each coordinate dTTP. Residue His-224 is part of the active site. Asp-302 is a binding site for Mn(2+). Residues Lys-303, Tyr-306, Asp-310, Arg-324, Arg-343, Lys-345, Asn-349, Arg-357, Tyr-365, Gln-366, His-367, and Lys-368 each coordinate dGTP. Lys-303, Tyr-306, and Asp-310 together coordinate dATP. Residues Lys-303, Tyr-306, and Asp-310 each coordinate dCTP. Residues Lys-303, Tyr-306, and Asp-310 each coordinate dTTP. Position 357 (Arg-357) interacts with dATP. Arg-357 is a dCTP binding site. Gln-366 contacts dATP. Gln-366 lines the dCTP pocket. Gln-366 provides a ligand contact to dTTP. Residues Arg-442, Lys-446, and Lys-515 each coordinate GTP. Lys-515 is a dGTP binding site.

The protein belongs to the SAMHD1 family. As to quaternary structure, homodimer; in absence of GTP and dNTP. Homotetramer; in GTP- and dNTP-bound form. Interacts with rbbp8/CtIP. It depends on Zn(2+) as a cofactor.

The protein localises to the nucleus. It is found in the chromosome. The enzyme catalyses a 2'-deoxyribonucleoside 5'-triphosphate + H2O = a 2'-deoxyribonucleoside + triphosphate + H(+). It catalyses the reaction dATP + H2O = 2'-deoxyadenosine + triphosphate + H(+). The catalysed reaction is dCTP + H2O = 2'-deoxycytidine + triphosphate + H(+). It carries out the reaction dGTP + H2O = 2'-deoxyguanosine + triphosphate + H(+). The enzyme catalyses dTTP + H2O = thymidine + triphosphate + H(+). Allosterically activated and regulated via the combined actions of GTP and dNTPs (dATP, dGTP, dTTP and dCTP): Allosteric site 1 binds GTP, while allosteric site 2 binds dNTP. Allosteric activation promotes the formation of highly active homotetramers. Its function is as follows. Protein that acts both as a host restriction factor involved in defense response to virus and as a regulator of DNA end resection at stalled replication forks. Has deoxynucleoside triphosphate (dNTPase) activity, which is required to restrict infection by viruses: dNTPase activity reduces cellular dNTP levels to levels too low for retroviral reverse transcription to occur, blocking early-stage virus replication in dendritic and other myeloid cells. Functions during S phase at stalled DNA replication forks to promote the resection of gapped or reversed forks: acts by stimulating the exonuclease activity of MRE11, activating the ATR-CHK1 pathway and allowing the forks to restart replication. Its ability to promote degradation of nascent DNA at stalled replication forks is required to prevent induction of type I interferons, thereby preventing chronic inflammation. Ability to promote DNA end resection at stalled replication forks is independent of dNTPase activity. The sequence is that of Deoxynucleoside triphosphate triphosphohydrolase SAMHD1 from Gallus gallus (Chicken).